Reading from the N-terminus, the 354-residue chain is Elongation factor Ts, mitochondrial (354 aa).

A mitochondrion-targeting transit peptide spans 1–47 (MMRSTLSLLQKCRLPNNNGSLLSFKNNQVVNQTALFSMKSNQQYRFY).

Belongs to the EF-Ts family.

It localises to the mitochondrion. Functionally, associates with the EF-Tu.GDP complex and induces the exchange of GDP to GTP. It remains bound to the aminoacyl-tRNA.EF-Tu.GTP complex up to the GTP hydrolysis stage on the ribosome. The sequence is that of Elongation factor Ts, mitochondrial (tsfm) from Heterostelium pallidum (strain ATCC 26659 / Pp 5 / PN500) (Cellular slime mold).